Consider the following 333-residue polypeptide: Arginase (333 aa).

N-acetylmethionine is present on methionine 1. The residue at position 16 (serine 16) is a Phosphoserine. Threonine 77 carries the phosphothreonine modification. Histidine 123, aspartate 146, histidine 148, and aspartate 150 together coordinate Mn(2+). Substrate-binding positions include 148-152, 159-161, and aspartate 205; these read HADIN and SGN. The Mn(2+) site is built by aspartate 256 and aspartate 258. Threonine 270 is subject to Phosphothreonine. Residues threonine 270 and glutamate 301 each coordinate substrate.

Belongs to the arginase family. Homotrimer. It depends on Mn(2+) as a cofactor.

The enzyme catalyses L-arginine + H2O = urea + L-ornithine. Its pathway is nitrogen metabolism; urea cycle; L-ornithine and urea from L-arginine: step 1/1. The polypeptide is Arginase (CAR1) (Saccharomyces cerevisiae (strain ATCC 204508 / S288c) (Baker's yeast)).